The following is a 482-amino-acid chain: ADP-ribosylation factor GTPase-activating protein effector protein 1 (482 aa).

The disordered stretch occupies residues 116–156; sequence QHKSTHSHHINHQTHPIHSSSSNSNSNNRIPTKTDSSKQHT. Positions 118–127 are enriched in basic residues; the sequence is KSTHSHHINH. A compositionally biased stretch (low complexity) spans 134–143; it reads SSSSNSNSNN. The Arf-GAP domain occupies 170–297; sequence DELLSIVRKI…FVIDSNQGRE (128 aa). The C4-type zinc finger occupies 186–210; the sequence is CCDCGSTATVEWVSINLLCILCIKC.

Its subcellular location is the cytoplasm. Functionally, GTPase-activating protein (GAP) for the ADP ribosylation factors ARF1 and ARF2. May be involved in the endocytic pathway. The protein is ADP-ribosylation factor GTPase-activating protein effector protein 1 (AGE1) of Saccharomyces cerevisiae (strain ATCC 204508 / S288c) (Baker's yeast).